The following is a 492-amino-acid chain: Ribose import ATP-binding protein RbsA (492 aa).

ABC transporter domains are found at residues 3 to 239 and 249 to 492; these read IEMK…VGRS and AEIR…TGGK. Residue 35-42 coordinates ATP; it reads GENGAGKS.

Belongs to the ABC transporter superfamily. Ribose importer (TC 3.A.1.2.1) family. The complex is composed of an ATP-binding protein (RbsA), two transmembrane proteins (RbsC) and a solute-binding protein (RbsB).

Its subcellular location is the cell membrane. The catalysed reaction is D-ribose(out) + ATP + H2O = D-ribose(in) + ADP + phosphate + H(+). Part of the ABC transporter complex RbsABC involved in ribose import. Responsible for energy coupling to the transport system. The polypeptide is Ribose import ATP-binding protein RbsA (Lactococcus lactis subsp. cremoris (strain SK11)).